Reading from the N-terminus, the 257-residue chain is Thiazole synthase (257 aa).

The active-site Schiff-base intermediate with DXP is the Lys97. 1-deoxy-D-xylulose 5-phosphate-binding positions include Gly158, 184 to 185 (AG), and 206 to 207 (NT).

This sequence belongs to the ThiG family. In terms of assembly, homotetramer. Forms heterodimers with either ThiH or ThiS.

The protein localises to the cytoplasm. The enzyme catalyses [ThiS sulfur-carrier protein]-C-terminal-Gly-aminoethanethioate + 2-iminoacetate + 1-deoxy-D-xylulose 5-phosphate = [ThiS sulfur-carrier protein]-C-terminal Gly-Gly + 2-[(2R,5Z)-2-carboxy-4-methylthiazol-5(2H)-ylidene]ethyl phosphate + 2 H2O + H(+). The protein operates within cofactor biosynthesis; thiamine diphosphate biosynthesis. Catalyzes the rearrangement of 1-deoxy-D-xylulose 5-phosphate (DXP) to produce the thiazole phosphate moiety of thiamine. Sulfur is provided by the thiocarboxylate moiety of the carrier protein ThiS. In vitro, sulfur can be provided by H(2)S. The polypeptide is Thiazole synthase (Desulforamulus reducens (strain ATCC BAA-1160 / DSM 100696 / MI-1) (Desulfotomaculum reducens)).